Reading from the N-terminus, the 426-residue chain is Molybdopterin molybdenumtransferase 1 (426 aa).

It belongs to the MoeA family. It depends on Mg(2+) as a cofactor.

The enzyme catalyses adenylyl-molybdopterin + molybdate = Mo-molybdopterin + AMP + H(+). It functions in the pathway cofactor biosynthesis; molybdopterin biosynthesis. Functionally, catalyzes the insertion of molybdate into adenylated molybdopterin with the concomitant release of AMP. The polypeptide is Molybdopterin molybdenumtransferase 1 (moeA1) (Mycobacterium tuberculosis (strain ATCC 25618 / H37Rv)).